Consider the following 456-residue polypeptide: Acyl-CoA transferase FPSE_08120 (456 aa).

Residues 1–33 (MARLLFSGQRLRPSFLRSYIRANPSSTPSATRA) constitute a mitochondrion transit peptide.

Belongs to the CoA-transferase III family.

The protein resides in the mitochondrion. Its function is as follows. Acyl-CoA transferase; part of the Fusarium detoxification of benzoxazolinone cluster involved in the degradation of benzoxazolinones produced by the host plant. Maize, wheat, and rye produce the 2 benzoxazinone phytoanticipins 2,4-dihy-droxy-7-methoxy-1,4-benzoxazin-3-one (DIMBOA) and 2,4-dihydroxy-1,4-benzoxazin-3-one (DIBOA) that, due to their inherent instability once released, spontaneously degrade to the more stable corresponding benzoxazolinones, 6-methoxy-2-benzoxazolinone (MBOA) and 2-benzoxazolinone (BOA), respectively. The first step in the detoxification of benzoxazolinones involves the hydrolysis of the cyclic ester bond of benzoxazolinones by the gamma-lactamase FDB1 to aminophenols. FDB1 is able to convert 2-benzoxazolinone (BOA) into 2-aminophenol (2-AP), as well as 6-methoxy-2-benzoxazolinone (MBOA) into 5-methoxy-2-aminophenol (2-AMP). The N-malonyltransferase FDB2 then metabolizes aminophenols via N-malonylation to non-toxic malonamic acids. FDB2 converts 2-AP into N-(2-hydroxyphenyl) malonamic acid (HPMA) and 2-AMP into N-(2-hydroxy-4-methoxyphenyl) malonamic acid (HMPMA). The cluster also contains 2 transcription factors (FDB3 and FPSE_08121), an aldo-keto reductase (FPSE_08125) that possibly associates with a ketone component of BOA and MBOA degradation, an esterase (FPSE_08126), an acyl-CoA transferase (FPSE_08120), a solute carrier protein (FPSE_08119) and a transmembrane transporter (FPSE_08127) proposed to shuttle metabolites of benzoxazolinone degradation. The protein is Acyl-CoA transferase FPSE_08120 of Fusarium pseudograminearum (strain CS3096) (Wheat and barley crown-rot fungus).